The sequence spans 364 residues: Sorbitol dehydrogenase (364 aa).

A Zn(2+)-binding site is contributed by cysteine 54. Tyrosine 60 lines the substrate pocket. Zn(2+) contacts are provided by histidine 79 and glutamate 80. Glutamate 165 contacts substrate. NAD(+) is bound by residues isoleucine 193, aspartate 213, arginine 218, 284–286 (VGM), and 308–310 (VFR). Positions 310 and 311 each coordinate substrate.

Belongs to the zinc-containing alcohol dehydrogenase family. As to quaternary structure, homotetramer. Zn(2+) is required as a cofactor. As to expression, mostly expressed in dry seeds and leaves, and, to a lower extent, in roots, stems, flowers and siliques (at protein level).

It is found in the mitochondrion membrane. The protein resides in the cell membrane. Its subcellular location is the cytoplasm. It localises to the cytosol. It catalyses the reaction keto-D-fructose + NADH + H(+) = D-sorbitol + NAD(+). It carries out the reaction ribitol + NAD(+) = D-ribulose + NADH + H(+). The catalysed reaction is xylitol + NAD(+) = D-xylulose + NADH + H(+). In terms of biological role, polyol dehydrogenase that catalyzes the NAD(+)-dependent oxidation of various sugar alcohols. Is mostly active with D-sorbitol (D-glucitol), ribitol and xylitol as substrates, leading to the C2-oxidized products D-fructose, D-ribulose and D-xylulose, respectively. To a lesser extent, can also oxidize arabitol, mannitol, lactitol and maltitol in vitro. Is required for sorbitol metabolism. Cannot use NADP(+) as the electron acceptor. This chain is Sorbitol dehydrogenase (SDH), found in Arabidopsis thaliana (Mouse-ear cress).